The primary structure comprises 171 residues: 3-hydroxydecanoyl-[acyl-carrier-protein] dehydratase (171 aa).

His-70 is an active-site residue.

This sequence belongs to the thioester dehydratase family. FabA subfamily. As to quaternary structure, homodimer.

The protein localises to the cytoplasm. The catalysed reaction is a (3R)-hydroxyacyl-[ACP] = a (2E)-enoyl-[ACP] + H2O. It carries out the reaction (3R)-hydroxydecanoyl-[ACP] = (2E)-decenoyl-[ACP] + H2O. The enzyme catalyses (2E)-decenoyl-[ACP] = (3Z)-decenoyl-[ACP]. It functions in the pathway lipid metabolism; fatty acid biosynthesis. Necessary for the introduction of cis unsaturation into fatty acids. Catalyzes the dehydration of (3R)-3-hydroxydecanoyl-ACP to E-(2)-decenoyl-ACP and then its isomerization to Z-(3)-decenoyl-ACP. Can catalyze the dehydratase reaction for beta-hydroxyacyl-ACPs with saturated chain lengths up to 16:0, being most active on intermediate chain length. In Azotobacter vinelandii (strain DJ / ATCC BAA-1303), this protein is 3-hydroxydecanoyl-[acyl-carrier-protein] dehydratase.